Reading from the N-terminus, the 998-residue chain is Sensor histidine kinase AruS (998 aa).

Disordered regions lie at residues 27–82 (ERRP…HARA), 154–198 (RQAG…LPAG), and 224–245 (RQHP…RQPR). Residues 40–49 (GEAAVRRAGL) show a composition bias toward low complexity. The segment covering 161-183 (HRLHRPRTTHRHAVRRAPGRRRE) has biased composition (basic residues). Transmembrane regions (helical) follow at residues 264–284 (VLLF…FFEY) and 395–415 (ASLL…SWLF). Residues 417–473 (SLVTRHLWRMSEFAGHIAEGDLQQPLRLDKVDRERDEIDAVAAALEDMRQALRTDRR) form the HAMP domain. The Histidine kinase domain occupies 513–734 (TMSHEIRTPL…TFWFEIELAL (222 aa)). His516 is modified (phosphohistidine; by autocatalysis). Residues 751 to 869 (EVLLVEDVAL…ELRRALGEVG (119 aa)) form the Response regulatory domain. Asp800 carries the 4-aspartylphosphate modification. Residues 894 to 987 (GRHKLAGLLG…RDGAEALRRA (94 aa)) form the HPt domain. Position 933 is a phosphohistidine (His933).

Post-translationally, autophosphorylated. Activation may require a sequential transfer of a phosphate group from a His in the primary transmitter domain, to an Asp in the receiver domain and to a His in the secondary transmitter domain.

It localises to the cell membrane. It catalyses the reaction ATP + protein L-histidine = ADP + protein N-phospho-L-histidine.. It participates in amino-acid degradation; L-arginine degradation [regulation]. Its function is as follows. Member of the two-component regulatory system AruS/AruR, which is involved in the regulation of the arginine transaminase (ATA) pathway in response to exogeneous L-arginine. Probably functions as a sensor kinase that phosphorylates AruR. This is Sensor histidine kinase AruS (aruS) from Pseudomonas aeruginosa (strain ATCC 15692 / DSM 22644 / CIP 104116 / JCM 14847 / LMG 12228 / 1C / PRS 101 / PAO1).